The chain runs to 509 residues: Cytochrome P450 4X1 (509 aa).

Residues 14–34 (FYLAFVFCLALGLLQAIKLYL) form a helical membrane-spanning segment. Cys454 is a heme binding site.

The protein belongs to the cytochrome P450 family. The cofactor is heme. In terms of tissue distribution, expressed in brain, heart, kidney and skin and, at lower levels, in skeletal muscle and liver. In the brain, high levels are detected in amygdala and lower levels in globus pallidus and cerebellum. In the heart, very high levels in aorta, but very low levels in other heart regions. Also expressed in breast, prostate and colon.

The protein resides in the endoplasmic reticulum membrane. It is found in the microsome membrane. The catalysed reaction is N-(5Z,8Z,11Z,14Z-eicosatetraenoyl)-ethanolamine + reduced [NADPH--hemoprotein reductase] + O2 = N-(14,15-epoxy-5Z,8Z,11Z-eicosatrienoyl)-ethanolamine + oxidized [NADPH--hemoprotein reductase] + H2O + H(+). A cytochrome P450 monooxygenase that selectively catalyzes the epoxidation of the last double bond of the arachidonoyl moiety of anandamide, potentially modulating endocannabinoid signaling. Has no hydroxylase activity toward various fatty acids, steroids and prostaglandins. Mechanistically, uses molecular oxygen inserting one oxygen atom into a substrate, and reducing the second into a water molecule, with two electrons provided by NADPH via cytochrome P450 reductase (CPR; NADPH-ferrihemoprotein reductase). This chain is Cytochrome P450 4X1, found in Homo sapiens (Human).